Consider the following 86-residue polypeptide: Large ribosomal subunit protein bL31 (86 aa).

Positions 65–86 (YRMASSDSSEQKDKSSEEKKES) are disordered. Over residues 73 to 86 (SEQKDKSSEEKKES) the composition is skewed to basic and acidic residues.

This sequence belongs to the bacterial ribosomal protein bL31 family. Type A subfamily. In terms of assembly, part of the 50S ribosomal subunit.

Functionally, binds the 23S rRNA. In Prochlorococcus marinus (strain NATL1A), this protein is Large ribosomal subunit protein bL31.